The following is a 1050-amino-acid chain: MLCWGYWSLGQPGISTNLQGIVAEPQVCGFISDRSVKEVACGGNHSVFLLEDGEVYTCGLNTKGQLGHEREGNKPEQIGALADQHIIHVACGESHSLALSDRGQLFSWGAGSDGQLGLMTTEDSVAVPRLIQKLNQQTILQVSCGNWHCLALAADGQFFTWGKNSHGQLGLGKEFPSQASPQRVRSLEGIPLAQVAAGGAHSFALSLSGAVFGWGMNNAGQLGLSDEKDRESPCHVKLLRTQKVVYISCGEEHTAVLTKSGGVFTFGAGSCGQLGHDSMNDEVNPRRVLELMGSEVTQIACGRQHTLAFVPSSGLIYAFGCGARGQLGTGHTCNVKCPSPVKGYWAAHSGQLSARADRFKYHIVKQIFSGGDQTFVLCSKYENYSPAVDFRTMNQAHYTSLINDETIAVWRQKLSEHNNANTINGVVQILSSAACWNGSFLEKKIDEHFKTSPKIPGIDLNSTRVLFEKLMNSQHSMILEQILNSFESCLIPQLSSSPPDVEAMRIYLILPEFPLLQDSKYYITLTIPLAMAILRLDTNPSKVLDNWWSQVCPKYFMKLVNLYKGAVLYLLRGRKTFLIPVLFNNYITAALKLLEKLYKVNLKVKHVEYDTFYIPEISNLVDIQEDYLMWFLHQAGMKARPSIIQDTVTLCSYPFIFDAQAKTKMLQTDAELQMQVAVNGANLQNVFMLLTLEPLLARSPFLVLHVRRNNLVGDALRELSIHSDIDLKKPLKVIFDGEEAVDAGGVTKEFFLLLLKELLNPIYGMFTYYQDSNLLWFSDTCFVEHNWFHLIGITCGLAIYNSTVVDLHFPLALYKKLLNVKPGLEDLKELSPTEGRSLQELLDYPGEDVEETFCLNFTICRESYGVIEQKKLIPGGDNVTVCKDNRQEFVDAYVNYVFQISVHEWYTAFSSGFLKVCGGKVLELFQPSELRAMMVGNSNYNWEELEETAIYKGDYSATHPTVKLFWETFHEFPLEKKKKFLLFLTGSDRIPIYGMASLQIVIQSTASGEEYLPVAHTCYNLLDLPKYSSKEILSARLTQALDNYEGFSLA.

RCC1 repeat units follow at residues 1 to 51, 52 to 101, 102 to 154, 156 to 207, 208 to 259, 261 to 311, and 313 to 366; these read MLCW…FLLE, DGEV…ALSD, RGQL…ALAA, GQFF…ALSL, SGAV…VLTK, GGVF…AFVP, and SGLI…IVKQ. One can recognise an HECT domain in the interval 951 to 1050; sequence YKGDYSATHP…LDNYEGFSLA (100 aa). Cys-1018 (glycyl thioester intermediate) is an active-site residue.

Post-translationally, ubiquitinated; which promotes degradation by the proteasome.

The protein localises to the cytoplasm. Its subcellular location is the cytoplasmic vesicle. The catalysed reaction is S-ubiquitinyl-[E2 ubiquitin-conjugating enzyme]-L-cysteine + [acceptor protein]-L-lysine = [E2 ubiquitin-conjugating enzyme]-L-cysteine + N(6)-ubiquitinyl-[acceptor protein]-L-lysine.. It functions in the pathway protein modification; protein ubiquitination. E3 ubiquitin-protein ligase which accepts ubiquitin from an E2 ubiquitin-conjugating enzyme in the form of a thioester and then directly transfers the ubiquitin to targeted substrates. This chain is Probable E3 ubiquitin-protein ligase HERC3 (HERC3), found in Homo sapiens (Human).